The primary structure comprises 226 residues: Small ribosomal subunit protein uS2c (226 aa).

This sequence belongs to the universal ribosomal protein uS2 family.

It localises to the plastid. The protein resides in the chloroplast. The protein is Small ribosomal subunit protein uS2c (rps2) of Phaeodactylum tricornutum (strain CCAP 1055/1).